A 492-amino-acid polypeptide reads, in one-letter code: Solute carrier family 2, facilitated glucose transporter member 1 (492 aa).

N-acetylmethionine is present on M1. The Cytoplasmic portion of the chain corresponds to 1-11 (MDPSSKKVTGR). Residues 12–33 (LMLAVGGAVLGSLQFGYNTGVI) form a helical membrane-spanning segment. Residues 34 to 66 (NAPQKVIEEFYNQTWNHRYGEPIPSTTLTTLWS) are Extracellular-facing. Residue N45 is glycosylated (N-linked (GlcNAc...) asparagine). Residues 67–87 (LSVAIFSVGGMIGSFSVGLFV) traverse the membrane as a helical segment. Topologically, residues 88 to 90 (NRF) are cytoplasmic. Residues 91-112 (GRRNSMLMMNLLAFVAAVLMGF) form a helical membrane-spanning segment. Residues 113–120 (SKLGKSFE) lie on the Extracellular side of the membrane. Residues 121–144 (MLILGRFIIGVYCGLTTGFVPMYV) traverse the membrane as a helical segment. The Cytoplasmic segment spans residues 145 to 155 (GEVSPTALRGA). Residues 156–176 (LGTLHQLGIVVGILIAQVFGL) form a helical membrane-spanning segment. Q161 is a D-glucose binding site. Residues 177-185 (DSIMGNADL) lie on the Extracellular side of the membrane. Residues 186-206 (WPLLLSVIFIPALLQCILLPF) form a helical membrane-spanning segment. Over 207 to 271 (CPESPRFLLI…LFRSPAYRQP (65 aa)) the chain is Cytoplasmic. Phosphoserine is present on S226. The chain crosses the membrane as a helical span at residues 272 to 293 (ILIAVVLQLSQQLSGINAVFYY). Residues 282 to 283 (QQ) and N288 each bind D-glucose. Residues 294–306 (STSIFEKAGVQQP) are Extracellular-facing. A helical membrane pass occupies residues 307 to 328 (VYATIGSGIVNTAFTVVSLFVV). N317 contributes to the D-glucose binding site. Residues 329–334 (ERAGRR) are Cytoplasmic-facing. Residues 335 to 355 (TLHLIGLAGMAGCAVLMTIAL) traverse the membrane as a helical segment. The Extracellular segment spans residues 356-365 (ALLERLPWMS). The chain crosses the membrane as a helical span at residues 366 to 388 (YLSIVAIFGFVAFFEVGPGPIPW). D-glucose-binding residues include E380 and W388. The Cytoplasmic portion of the chain corresponds to 389–401 (FIVAELFSQGPRP). A helical transmembrane segment spans residues 402–422 (AAIAVAGFSNWTSNFIVGMCF). Over 423 to 429 (QYVEQLC) the chain is Extracellular. Residues 430–450 (GPYVFIIFTVLLVLFFIFTYF) traverse the membrane as a helical segment. Over 451–492 (KVPETKGRTFDEIASGFRQGGASQSDKTPEELFHPLGADSQV) the chain is Cytoplasmic. Position 465 is a phosphoserine (S465). Residues 468 to 492 (RQGGASQSDKTPEELFHPLGADSQV) are disordered. The residue at position 478 (T478) is a Phosphothreonine. Residue S490 is modified to Phosphoserine.

The protein belongs to the major facilitator superfamily. Sugar transporter (TC 2.A.1.1) family. Glucose transporter subfamily. In terms of assembly, found in a complex with ADD2, DMTN and SLC2A1. Interacts (via C-terminus cytoplasmic region) with DMTN isoform 2. Interacts with SNX27; the interaction is required when endocytosed to prevent degradation in lysosomes and promote recycling to the plasma membrane. Interacts with GIPC (via PDZ domain). Interacts with STOM. Interacts with SGTA (via Gln-rich region). Interacts with isoform 1 of BSG. Interacts with SMIM43; the interaction may promote SLC2A1-mediated glucose transport to meet the energy needs of mesendoderm differentiation. In terms of processing, phosphorylation at Ser-226 by PKC promotes glucose uptake by increasing cell membrane localization. In terms of tissue distribution, retina (at protein level).

It localises to the cell membrane. It is found in the photoreceptor inner segment. It catalyses the reaction D-glucose(out) = D-glucose(in). With respect to regulation, the uptake of glucose is inhibited by cytochalasin B. Glucose uptake is increased in response to phorbol ester 12-O-tetradecanoylphorbol-13-acetate (TPA) treatment: TPA-induced glucose uptake requires phosphorylation at Ser-226. Facilitative glucose transporter, which is responsible for constitutive or basal glucose uptake. Has a very broad substrate specificity; can transport a wide range of aldoses including both pentoses and hexoses. Most important energy carrier of the brain: present at the blood-brain barrier and assures the energy-independent, facilitative transport of glucose into the brain. In association with BSG and NXNL1, promotes retinal cone survival by increasing glucose uptake into photoreceptors. Required for mesendoderm differentiation. This Mus musculus (Mouse) protein is Solute carrier family 2, facilitated glucose transporter member 1.